Consider the following 161-residue polypeptide: tRNA-specific adenosine deaminase (161 aa).

A CMP/dCMP-type deaminase domain is found at 2-120 (TQDELYMKEA…GTLMNLLQEE (119 aa)). Residue H53 participates in Zn(2+) binding. The active-site Proton donor is E55. Positions 83 and 86 each coordinate Zn(2+).

This sequence belongs to the cytidine and deoxycytidylate deaminase family. In terms of assembly, homodimer. Zn(2+) serves as cofactor.

The catalysed reaction is adenosine(34) in tRNA + H2O + H(+) = inosine(34) in tRNA + NH4(+). Its function is as follows. Catalyzes the deamination of adenosine to inosine at the wobble position 34 of tRNA(Arg2). This is tRNA-specific adenosine deaminase from Bacillus subtilis (strain 168).